The following is a 193-amino-acid chain: Ion-translocating oxidoreductase complex subunit B (193 aa).

Residues 1 to 26 are hydrophobic; it reads MSTMLIAVILLTLLALFFGVLLGFAA. The region spanning 32–90 is the 4Fe-4S domain; sequence EGNPIVDELEAILPQTQCGQCGYPGCRPYAEAIANGDKVNKCPPGGTATMEKLASLMGV. Residues C49, C52, C57, C73, C114, C117, C120, C124, C144, C147, C150, and C154 each contribute to the [4Fe-4S] cluster site. 2 consecutive 4Fe-4S ferredoxin-type domains span residues 105–134 and 136–164; these read KVAY…GAGK and MHTV…MVPV.

The protein belongs to the 4Fe4S bacterial-type ferredoxin family. RnfB subfamily. In terms of assembly, the complex is composed of six subunits: RnfA, RnfB, RnfC, RnfD, RnfE and RnfG. It depends on [4Fe-4S] cluster as a cofactor.

It localises to the cell inner membrane. In terms of biological role, part of a membrane-bound complex that couples electron transfer with translocation of ions across the membrane. This chain is Ion-translocating oxidoreductase complex subunit B, found in Shewanella oneidensis (strain ATCC 700550 / JCM 31522 / CIP 106686 / LMG 19005 / NCIMB 14063 / MR-1).